The chain runs to 329 residues: MSSTPVNVTVTGAAGQIGYALLFRIASGQLLGADTPVKLRLLEIPQAVRAAEGTALELEDSAFPLLAGVDVFDDAKRAFEGTNVALLVGARPRTKGMERGDLLSANGGIFKPQGEAINSGAAEDIRVLVVGNPANTNALIAQTHAPDVPAERFTAMTRLDHNRAIAQLAKKLGVPSAEIKKITIWGNHSATQYPDIFHAEVGGRSGAEAVGDQAWIADEFIPRVAKRGAEIIEVRGASSAASAASAAIDHIFTWVNGTPAGDWTSAAIPSDGSYGVPEGLISSFPVTASGGRFEIVQGLELDAFSREKIDASVRELAEEREAVRALGLI.

12–18 provides a ligand contact to NAD(+); sequence GAAGQIG. Positions 93 and 99 each coordinate substrate. NAD(+) contacts are provided by residues N106, Q113, and 130–132; that span reads VGN. 2 residues coordinate substrate: N132 and R163. The active-site Proton acceptor is H188.

It belongs to the LDH/MDH superfamily. MDH type 2 family.

It carries out the reaction (S)-malate + NAD(+) = oxaloacetate + NADH + H(+). In terms of biological role, catalyzes the reversible oxidation of malate to oxaloacetate. The chain is Malate dehydrogenase from Frankia casuarinae (strain DSM 45818 / CECT 9043 / HFP020203 / CcI3).